We begin with the raw amino-acid sequence, 158 residues long: Small ribosomal subunit protein uS15 (158 aa).

Over residues 1 to 18 (MARMHARKRGKSGSKRPP) the composition is skewed to basic residues. The segment at 1-21 (MARMHARKRGKSGSKRPPRTA) is disordered.

It belongs to the universal ribosomal protein uS15 family. As to quaternary structure, part of the 30S ribosomal subunit.

The protein is Small ribosomal subunit protein uS15 of Pyrococcus furiosus (strain ATCC 43587 / DSM 3638 / JCM 8422 / Vc1).